Consider the following 96-residue polypeptide: SPbeta prophage-derived uncharacterized protein YosV (96 aa).

The protein is SPbeta prophage-derived uncharacterized protein YosV (yosV) of Bacillus subtilis (strain 168).